The sequence spans 266 residues: Uridylate kinase (266 aa).

ATP is bound at residue 26–29 (KLGG). Residue glycine 67 coordinates UMP. ATP contacts are provided by glycine 68 and arginine 72. UMP-binding positions include aspartate 87 and 148 to 155 (LGAPYFST). Positions 181 and 184 each coordinate ATP.

The protein belongs to the UMP kinase family. In terms of assembly, homohexamer.

It localises to the cytoplasm. The enzyme catalyses UMP + ATP = UDP + ADP. It functions in the pathway pyrimidine metabolism; CTP biosynthesis via de novo pathway; UDP from UMP (UMPK route): step 1/1. Inhibited by UTP. Catalyzes the reversible phosphorylation of UMP to UDP. The sequence is that of Uridylate kinase from Acidothermus cellulolyticus (strain ATCC 43068 / DSM 8971 / 11B).